Reading from the N-terminus, the 171-residue chain is Large ribosomal subunit protein bL9 (171 aa).

Belongs to the bacterial ribosomal protein bL9 family.

Its function is as follows. Binds to the 23S rRNA. The polypeptide is Large ribosomal subunit protein bL9 (Rickettsia felis (strain ATCC VR-1525 / URRWXCal2) (Rickettsia azadi)).